Consider the following 195-residue polypeptide: MPIGVPKVPFRLPGEPSAQWVDLYNRLYRERVLFLCQDLDDELANQLIGIMLYLNAEEKSKDLYIYINSPGGSVTCGIAVYDTMNYIKADVTTICVGTAASMASFVLAGGTQGKRIALPHSRIMIHQPEGGSRGQASEVLSESEEVMRIRRQVGKIYAQRTGQPLRRISRDLDRDQFLSAREAKDYGIVDQVATS.

Ser-101 functions as the Nucleophile in the catalytic mechanism. The active site involves His-126.

This sequence belongs to the peptidase S14 family. Component of the chloroplastic Clp protease core complex.

It localises to the plastid. The protein resides in the chloroplast stroma. The catalysed reaction is Hydrolysis of proteins to small peptides in the presence of ATP and magnesium. alpha-casein is the usual test substrate. In the absence of ATP, only oligopeptides shorter than five residues are hydrolyzed (such as succinyl-Leu-Tyr-|-NHMec, and Leu-Tyr-Leu-|-Tyr-Trp, in which cleavage of the -Tyr-|-Leu- and -Tyr-|-Trp bonds also occurs).. In terms of biological role, cleaves peptides in various proteins in a process that requires ATP hydrolysis. Has a chymotrypsin-like activity. Plays a major role in the degradation of misfolded proteins. In Oltmannsiellopsis viridis (Marine flagellate), this protein is ATP-dependent Clp protease proteolytic subunit.